We begin with the raw amino-acid sequence, 443 residues long: ATP-dependent protease ATPase subunit HslU (443 aa).

ATP is bound by residues I19, 61–66 (GVGKTE), D256, E321, and R393.

Belongs to the ClpX chaperone family. HslU subfamily. A double ring-shaped homohexamer of HslV is capped on each side by a ring-shaped HslU homohexamer. The assembly of the HslU/HslV complex is dependent on binding of ATP.

The protein resides in the cytoplasm. Functionally, ATPase subunit of a proteasome-like degradation complex; this subunit has chaperone activity. The binding of ATP and its subsequent hydrolysis by HslU are essential for unfolding of protein substrates subsequently hydrolyzed by HslV. HslU recognizes the N-terminal part of its protein substrates and unfolds these before they are guided to HslV for hydrolysis. This is ATP-dependent protease ATPase subunit HslU from Cupriavidus pinatubonensis (strain JMP 134 / LMG 1197) (Cupriavidus necator (strain JMP 134)).